A 304-amino-acid polypeptide reads, in one-letter code: MNKFEDFAIKLREILDIEDIKIDEPMKEHTSFKVGGPVDILLTPKHFNQVVDVVKLCKKENIPYYIMGNGSNLLVKDGGIRGVMIKLVKLNKIQVKGNKIITESGVSLKDISTTALENCLTGFEFACGIPGSVGGAVTMNAGAYNGEISNVIESAKVICNSGEIIVLNREEMELGYRMSSILKNGYTILEVTFNLEKGNKENIMNRIEDLSRRRNEKQPLEYASAGSTFKRPQGHFAAKLIEDSGLKGESVGDAQVSEKHSGFIINKGNATAKDILTLISIVQDRVRQNFDIDLYTEVRIIGED.

The region spanning 33–198 (KVGGPVDILL…LEVTFNLEKG (166 aa)) is the FAD-binding PCMH-type domain. Residue Arg177 is part of the active site. Catalysis depends on Ser227, which acts as the Proton donor. Glu297 is a catalytic residue.

The protein belongs to the MurB family. FAD serves as cofactor.

It localises to the cytoplasm. The enzyme catalyses UDP-N-acetyl-alpha-D-muramate + NADP(+) = UDP-N-acetyl-3-O-(1-carboxyvinyl)-alpha-D-glucosamine + NADPH + H(+). Its pathway is cell wall biogenesis; peptidoglycan biosynthesis. Functionally, cell wall formation. The chain is UDP-N-acetylenolpyruvoylglucosamine reductase from Clostridium kluyveri (strain NBRC 12016).